Consider the following 217-residue polypeptide: MGQKVHPIGMRVGIIRDWDAKWYAEKEYADYLHEDLAIRNFIKKELADASTSTIEIERAVNKVIVSIHTAKPGMVIGKAGSNVDALRAQLNKLTGKQVHINIIEIKQPDLDAHLVGESIARQLEQRVAFRRAQKQAIQRAMRAGAKGIKTQVSGRLNGADIARAEGYSEGTVPLHTLRADIDYAWEEALTTYGKLGVKVWIYRGEVLPARKNTKGGK.

Positions 38-106 (IRNFIKKELA…QVHINIIEIK (69 aa)) constitute a KH type-2 domain.

It belongs to the universal ribosomal protein uS3 family. In terms of assembly, part of the 30S ribosomal subunit. Forms a tight complex with proteins S10 and S14.

In terms of biological role, binds the lower part of the 30S subunit head. Binds mRNA in the 70S ribosome, positioning it for translation. The protein is Small ribosomal subunit protein uS3 of Streptococcus suis (strain 98HAH33).